Consider the following 488-residue polypeptide: NADH-ubiquinone oxidoreductase chain 2 (488 aa).

14 consecutive transmembrane segments (helical) span residues 11–31 (MIKY…SISI), 38–58 (MMLL…LLTI), 74–94 (ELIT…ISMF), 106–126 (ITEE…ISME), 129–149 (NLIT…ILAL), 162–182 (LKYY…IVSI), 211–231 (IALI…HGWL), 239–259 (GMLM…IVLI), 271–291 (IEVI…VGTV), 299–319 (VIRF…LFFV), 331–351 (IYYL…IIGV), 376–396 (IGIS…FTNF), 412–434 (IYIT…NVVK), and 460–480 (IVGG…IISI).

Belongs to the complex I subunit 2 family.

The protein localises to the mitochondrion inner membrane. It catalyses the reaction a ubiquinone + NADH + 5 H(+)(in) = a ubiquinol + NAD(+) + 4 H(+)(out). Its function is as follows. Core subunit of the mitochondrial membrane respiratory chain NADH dehydrogenase (Complex I) that is believed to belong to the minimal assembly required for catalysis. Complex I functions in the transfer of electrons from NADH to the respiratory chain. The immediate electron acceptor for the enzyme is believed to be ubiquinone. In Dictyostelium discoideum (Social amoeba), this protein is NADH-ubiquinone oxidoreductase chain 2 (nad2).